Consider the following 268-residue polypeptide: Proenkephalin-A (268 aa).

An N-terminal signal peptide occupies residues 1 to 24 (MARFLRLCTWLLALGSCLLATVQA). Cystine bridges form between C26/C48, C30/C52, and C33/C65. A disordered region spans residues 163-184 (TGDNRAKDSHQQESTNNDEDMS). 2 consecutive propeptides follow at residues 197 to 208 (SPQLEDEAKELQ) and 218 to 228 (VGRPEWWMDYQ). Phosphoserine is present on S252.

The protein belongs to the opioid neuropeptide precursor family. In terms of processing, proenkephalin-A is cleaved by CTSL to generate Met-enkephalin. Post-translationally, processed and degraded by ACE. Probably cleaved by ACE. In terms of processing, processed by ACE to generate Met-enkephalin in the nucleus accumbens of the brain. Post-translationally, the N-terminal domain contains 6 conserved cysteines thought to be involved in disulfide bonding and/or processing. Spermatogenic and somatic cells.

Its subcellular location is the cytoplasmic vesicle. The protein resides in the secretory vesicle. It localises to the chromaffin granule lumen. The protein localises to the secreted. Functionally, neuropeptide that competes with and mimic the effects of opiate drugs. They play a role in a number of physiologic functions, including pain perception and responses to stress. Met-enkephalin-Arg-Phe neuropeptide acts as a strong ligand of Mu-type opioid receptor OPRM1. Met-enkephalin-Arg-Phe-binding to OPRM1 in the nucleus accumbens of the brain increases activation of OPRM1, leading to long-term synaptic depression of glutamate release. In terms of biological role, increases glutamate release in the striatum and decreases GABA concentration in the striatum. Its function is as follows. Increases glutamate release in the striatum. The polypeptide is Proenkephalin-A (Penk) (Mus musculus (Mouse)).